Consider the following 204-residue polypeptide: Transcriptional regulator GfcR (204 aa).

Belongs to the purine/pyrimidine phosphoribosyltransferase family. GfcR subfamily.

In Methanosarcina mazei (strain ATCC BAA-159 / DSM 3647 / Goe1 / Go1 / JCM 11833 / OCM 88) (Methanosarcina frisia), this protein is Transcriptional regulator GfcR.